A 238-amino-acid chain; its full sequence is MNFQSSSSGSIVAIVPAAGIGSRMGATIPKQYLPLLDKPILAHTLQRLLSHPAIDKVIVAVSAEDSWFDSLAEARDPKLTRVLGGKERADSVLAALSALPDSCDAWALVHDAARPCLTHGDIDALLASRLTYPQGAILAMPVRDTMKRAATDGSIETTVCREALWHALTPQLFPAERLKQHLEQALAAGVSITDEASAMEWAGVYPGLVSGRADNIKVTHPDDLQLAGLFLQAQQQHT.

Belongs to the IspD/TarI cytidylyltransferase family. IspD subfamily.

It catalyses the reaction 2-C-methyl-D-erythritol 4-phosphate + CTP + H(+) = 4-CDP-2-C-methyl-D-erythritol + diphosphate. It functions in the pathway isoprenoid biosynthesis; isopentenyl diphosphate biosynthesis via DXP pathway; isopentenyl diphosphate from 1-deoxy-D-xylulose 5-phosphate: step 2/6. In terms of biological role, catalyzes the formation of 4-diphosphocytidyl-2-C-methyl-D-erythritol from CTP and 2-C-methyl-D-erythritol 4-phosphate (MEP). This Shewanella amazonensis (strain ATCC BAA-1098 / SB2B) protein is 2-C-methyl-D-erythritol 4-phosphate cytidylyltransferase.